A 337-amino-acid chain; its full sequence is Pyridoxal 5'-phosphate synthase subunit PdxS (337 aa).

Asp63 contributes to the D-ribose 5-phosphate binding site. Residue Lys120 is the Schiff-base intermediate with D-ribose 5-phosphate of the active site. Gly192 is a D-ribose 5-phosphate binding site. D-glyceraldehyde 3-phosphate is bound at residue Lys204. D-ribose 5-phosphate-binding positions include Gly253 and 274–275; that span reads GS.

It belongs to the PdxS/SNZ family. In terms of assembly, in the presence of PdxT, forms a dodecamer of heterodimers.

The catalysed reaction is aldehydo-D-ribose 5-phosphate + D-glyceraldehyde 3-phosphate + L-glutamine = pyridoxal 5'-phosphate + L-glutamate + phosphate + 3 H2O + H(+). It participates in cofactor biosynthesis; pyridoxal 5'-phosphate biosynthesis. In terms of biological role, catalyzes the formation of pyridoxal 5'-phosphate from ribose 5-phosphate (RBP), glyceraldehyde 3-phosphate (G3P) and ammonia. The ammonia is provided by the PdxT subunit. Can also use ribulose 5-phosphate and dihydroxyacetone phosphate as substrates, resulting from enzyme-catalyzed isomerization of RBP and G3P, respectively. This chain is Pyridoxal 5'-phosphate synthase subunit PdxS, found in Aeropyrum pernix (strain ATCC 700893 / DSM 11879 / JCM 9820 / NBRC 100138 / K1).